A 343-amino-acid polypeptide reads, in one-letter code: Protein rax1 (343 aa).

Residues 1 to 235 (MASAPRVSEV…NLNPLTCTGR (235 aa)) lie on the Cytoplasmic side of the membrane. One can recognise an RGS domain in the interval 109-228 (ELSNEQTINS…LNHKFKHNLN (120 aa)). A helical membrane pass occupies residues 236–256 (FIIGYVSTFAAYWLGFCGIFL). At 257 to 263 (DYSRRKR) the chain is on the extracellular side. A helical transmembrane segment spans residues 264-284 (VWTLLPFAFGFYNLICTWSKH). The Cytoplasmic portion of the chain corresponds to 285–317 (DPVLALLGYSEVKPFHYEKVLQPSIRLSLNRRA). A helical transmembrane segment spans residues 318–338 (IFVLSIIVLIVGANTAIFSCV). Topologically, residues 339-343 (PSIRL) are extracellular.

The protein resides in the cell membrane. Its subcellular location is the endoplasmic reticulum membrane. May be involved in cell polarization and division. The chain is Protein rax1 (rax1) from Schizosaccharomyces pombe (strain 972 / ATCC 24843) (Fission yeast).